A 135-amino-acid polypeptide reads, in one-letter code: C-type natriuretic peptide (135 aa).

The N-terminal stretch at 1–25 is a signal peptide; that stretch reads MSGHTSFYCGLLLLLLIQVQARPRA. A propeptide spanning residues 26-113 is cleaved from the precursor; that stretch reads DDSLQVLSRL…PLRFKGRSKK (88 aa). The tract at residues 46–67 is disordered; that stretch reads EELNNEAQEISPAASLPDLNTD. A disulfide bridge links Cys119 with Cys135.

The protein belongs to the natriuretic peptide family.

The protein localises to the secreted. Functionally, hormone which may be vasoactive and natriuretic. Has a cGMP-stimulating activity. The polypeptide is C-type natriuretic peptide (Squalus acanthias (Spiny dogfish)).